A 553-amino-acid polypeptide reads, in one-letter code: Solute carrier family 22 member 4 (553 aa).

Over 1–20 (MRDYDEVIAFLGEWGPFQRL) the chain is Cytoplasmic. A helical membrane pass occupies residues 21 to 41 (IFFLLSASIIPNGFNGMSVVF). Residues 42–142 (LAGTPEHRCL…NLVCEDDWKT (101 aa)) lie on the Extracellular side of the membrane. N-linked (GlcNAc...) asparagine glycosylation is found at Asn-57, Asn-64, and Asn-91. Residues 143–163 (PLTTSLFFVGVLCGSFVSGQL) traverse the membrane as a helical segment. Topologically, residues 164 to 171 (SDRFGRKK) are cytoplasmic. The helical transmembrane segment at 172–192 (VLFATMAVQTGFSFVQIFSTN) threads the bilayer. At 193-197 (WEMFT) the chain is on the extracellular side. A helical membrane pass occupies residues 198 to 218 (VLFAIVGMGQISNYVVAFILG). 218–225 (GTEILSKS) provides a ligand contact to ATP. At 219–232 (TEILSKSVRIIFST) the chain is on the cytoplasmic side. The chain crosses the membrane as a helical span at residues 233–253 (LGVCTFFAIGYMVLPLFAYFI). At 254 to 257 (RDWR) the chain is on the extracellular side. Residues 258–278 (MLLLALTLPGLFCVPLWWFIP) traverse the membrane as a helical segment. Topologically, residues 279–339 (ESPRWLISQR…IILDLFRTRN (61 aa)) are cytoplasmic. A helical membrane pass occupies residues 340-360 (IATITVMAVMLWMLTSVGYFA). Residues 361–373 (LSLNVPNLHGDVY) lie on the Extracellular side of the membrane. The helical transmembrane segment at 374-394 (LNCFLSGLIEVPAYFTAWLLL) threads the bilayer. Residues 395–400 (RTLPRR) are Cytoplasmic-facing. The helical transmembrane segment at 401 to 421 (YIIAGVLFWGGGVLLLIQVVP) threads the bilayer. Residues 422-428 (EDYNFVS) lie on the Extracellular side of the membrane. The chain crosses the membrane as a helical span at residues 429 to 449 (IGLVMLGKFGITSAFSMLYVF). Residues 450-462 (TAELYPTLVRNMA) are Cytoplasmic-facing. The helical transmembrane segment at 463–483 (VGITSMASRVGSIIAPYFVYL) threads the bilayer. Residues 484-488 (GAYNR) are Extracellular-facing. A helical membrane pass occupies residues 489-509 (LLPYILMGSLTVLIGIITLFF). Over 510 to 553 (PESFGVTLPENLEQMQKVRGFRCGKKSTVSVDREESPKVLITAF) the chain is Cytoplasmic.

This sequence belongs to the major facilitator (TC 2.A.1) superfamily. Organic cation transporter (TC 2.A.1.19) family. In terms of assembly, interacts with PDZK1. In terms of tissue distribution, expressed in kidney. Expressed in small intestines. Expressed in liver in non-parenchymal liver tissue such as sinusoidal vessels. Weakly expressed in lung and brain. Expressed in testis and spleen. Expressed in heart.

The protein resides in the apical cell membrane. Its subcellular location is the mitochondrion membrane. The protein localises to the basal cell membrane. It carries out the reaction ergothioneine(out) + Na(+)(out) = ergothioneine(in) + Na(+)(in). It catalyses the reaction acetylcholine(in) = acetylcholine(out). The catalysed reaction is (R)-carnitine(out) + Na(+)(out) = (R)-carnitine(in) + Na(+)(in). The enzyme catalyses glycine betaine(out) + Na(+)(out) = glycine betaine(in) + Na(+)(in). Allosterically activated by intracellular ATP. Functionally, transporter that mediates the transport of endogenous and microbial zwitterions and organic cations. Functions as a Na(+)-dependent and pH-dependent high affinity microbial symporter of potent food-derived antioxidant ergothioeine. Transports one sodium ion with one ergothioeine molecule. Involved in the absorption of ergothioneine from the luminal/apical side of the small intestine and renal tubular cells, and into non-parenchymal liver cells, thereby contributing to maintain steady-state ergothioneine level in the body. Also mediates the bidirectional transport of acetycholine, although the exact transport mechanism has not been fully identified yet. Most likely exports anti-inflammatory acetylcholine in non-neuronal tissues, thereby contributing to the non-neuronal cholinergic system. Displays a general physiological role linked to better survival by controlling inflammation and oxidative stress, which may be related to ergothioneine and acetycholine transports. May also function as a low-affinity Na(+)-dependent transporter of L-carnitine through the mitochondrial membrane, thereby maintaining intracellular carnitine homeostasis. May contribute to regulate the transport of cationic compounds in testis across the blood-testis-barrier. The sequence is that of Solute carrier family 22 member 4 from Mus musculus (Mouse).